The primary structure comprises 220 residues: Zinc-finger homeodomain protein 2 (220 aa).

A compositionally biased stretch (acidic residues) spans 1–11 (MNFEDQEEDME). A disordered region spans residues 1-40 (MNFEDQEEDMEMSGVNPPCGYDSLSGEGATSSGGGGVGRS). Residues 31-40 (SSGGGGVGRS) are compositionally biased toward gly residues. The ZF-HD dimerization-type zinc-finger motif lies at 49-98 (YRECLKNHAVNIGGHAVDGCCEFMPSGEDGTLDALKCAACGCHRNFHRKE). The interval 100–160 (ESIGGRAHRV…SSSGGTTKRF (61 aa)) is disordered. Residues 157 to 220 (TKRFRTKFTA…NNKNSLGKKP (64 aa)) constitute a DNA-binding region (homeobox; atypical).

As to quaternary structure, homo or heterodimer. Interacts with ZHD1, ZHD3, ZHD4, ZHD5, ZHD6, ZHD7, ZHD8, ZHD9, ZHD10 and ZHD11. Mostly expressed in flowers and, to a lower extent, in inflorescence, stems and leaves.

Its subcellular location is the nucleus. Functionally, essential protein. Putative transcription factor. The sequence is that of Zinc-finger homeodomain protein 2 (ZHD1) from Arabidopsis thaliana (Mouse-ear cress).